Consider the following 446-residue polypeptide: N-succinylarginine dihydrolase (446 aa).

Substrate-binding positions include Ala-19–Ser-28, Asn-110, and His-137–Arg-138. Residue Glu-174 is part of the active site. Arg-213 is a binding site for substrate. His-249 is an active-site residue. Residues Asp-251 and Asn-364 each contribute to the substrate site. The active-site Nucleophile is the Cys-370.

It belongs to the succinylarginine dihydrolase family. Homodimer.

It carries out the reaction N(2)-succinyl-L-arginine + 2 H2O + 2 H(+) = N(2)-succinyl-L-ornithine + 2 NH4(+) + CO2. The protein operates within amino-acid degradation; L-arginine degradation via AST pathway; L-glutamate and succinate from L-arginine: step 2/5. Functionally, catalyzes the hydrolysis of N(2)-succinylarginine into N(2)-succinylornithine, ammonia and CO(2). The polypeptide is N-succinylarginine dihydrolase (Acinetobacter baylyi (strain ATCC 33305 / BD413 / ADP1)).